The following is a 922-amino-acid chain: Two-component sensor PprA (922 aa).

The segment covering 1-10 (MFEFSRSSSA) has biased composition (low complexity). A disordered region spans residues 1–22 (MFEFSRSSSAEAERPEPFSQEG). Positions 506-558 (VKTRYRLADGQGNWHWLYDEAKLLRDAQGLPSEAVGLWLDVTEQHLAAQRIAE) constitute a PAC 1 domain. The 64-residue stretch at 559 to 622 (SEERYRVLVE…EDASALRARL (64 aa)) folds into the PAS domain. One can recognise a PAC 2 domain in the interval 632-684 (EVPELRFNLPGQRFLWLVWAERPLFDARGELCEVQAVGRDNTPVRRAQQQLAQ). The Histidine kinase domain occupies 697–916 (GLAHEVKQPL…LFVVRLPLAA (220 aa)). At H700 the chain carries Phosphohistidine; by autocatalysis.

Post-translationally, autophosphorylated.

The catalysed reaction is ATP + protein L-histidine = ADP + protein N-phospho-L-histidine.. In terms of biological role, member of the two-component regulatory system PprA/PprB involved in biofilm formation by controlling the expression of many related genes including type IVb pili major subunit flp pilin, adhesin bapA or cupE fimbriae. Functions as a heme sensor histidine kinase which is autophosphorylated at a histidine residue and transfers its phosphate group to PprB. This is Two-component sensor PprA from Pseudomonas aeruginosa (strain ATCC 15692 / DSM 22644 / CIP 104116 / JCM 14847 / LMG 12228 / 1C / PRS 101 / PAO1).